A 364-amino-acid chain; its full sequence is MTDILNLTYEELEAFMTAELGEPRFRARQVWQWLWQKCARSFDEMTNVSKATRARLAEKAVITWPEVETVQKSADGTTKFLLRLADGALVETVLIPSASREGTLRITQCLSCQVGCAMGCTFCSTGTMGFERNMTMGEILGQVLVARAHLGDSRPDHPILRNLVFMGMGEPLLNLNEVMRSLRTLNDEFGLSFSPRRITVSTCGIEKGLRELGESGLAFLAVSLHAPNQEIRKRIMPKAAHWHLDDLITALESYPLKTRERVTFEYLLLGGVNDGIEHARELVRLVSRTKGKLNLIVYNPAEGDPYDAPTPERILAFEQYLWSKNITAIIRKSKGQDIKAACGQLKASELQRGTASAGADAPEA.

E91 (proton acceptor) is an active-site residue. The Radical SAM core domain occupies 102-337 (GTLRITQCLS…AIIRKSKGQD (236 aa)). Residues C109 and C342 are joined by a disulfide bond. 3 residues coordinate [4Fe-4S] cluster: C116, C120, and C123. Residues 169–170 (GE), S201, 223–225 (SLH), and N299 contribute to the S-adenosyl-L-methionine site. C342 (S-methylcysteine intermediate) is an active-site residue.

This sequence belongs to the radical SAM superfamily. RlmN family. [4Fe-4S] cluster is required as a cofactor.

It is found in the cytoplasm. The enzyme catalyses adenosine(2503) in 23S rRNA + 2 reduced [2Fe-2S]-[ferredoxin] + 2 S-adenosyl-L-methionine = 2-methyladenosine(2503) in 23S rRNA + 5'-deoxyadenosine + L-methionine + 2 oxidized [2Fe-2S]-[ferredoxin] + S-adenosyl-L-homocysteine. It carries out the reaction adenosine(37) in tRNA + 2 reduced [2Fe-2S]-[ferredoxin] + 2 S-adenosyl-L-methionine = 2-methyladenosine(37) in tRNA + 5'-deoxyadenosine + L-methionine + 2 oxidized [2Fe-2S]-[ferredoxin] + S-adenosyl-L-homocysteine. Its function is as follows. Specifically methylates position 2 of adenine 2503 in 23S rRNA and position 2 of adenine 37 in tRNAs. m2A2503 modification seems to play a crucial role in the proofreading step occurring at the peptidyl transferase center and thus would serve to optimize ribosomal fidelity. This chain is Dual-specificity RNA methyltransferase RlmN, found in Nitratidesulfovibrio vulgaris (strain ATCC 29579 / DSM 644 / CCUG 34227 / NCIMB 8303 / VKM B-1760 / Hildenborough) (Desulfovibrio vulgaris).